The chain runs to 103 residues: Preprofallaxidin-6 (103 aa).

Positions Met1 to Cys22 are cleaved as a signal peptide. Positions Glu23–Arg49 are excised as a propeptide. The disordered stretch occupies residues Glu24–Gly50. Positions Gly31–His41 are enriched in acidic residues. Position 65 is a leucine amide (Leu65). Positions Lys67–Lys103 are disordered. A propeptide spanning residues Ser69–Arg73 is cleaved from the precursor. A Phenylalanine amide modification is found at Phe77. Residues Ser81–Arg85 constitute a propeptide that is removed on maturation. Phe89 carries the post-translational modification Phenylalanine amide. The propeptide occupies Ser93–Arg97. Isoleucine amide is present on Ile101.

It belongs to the frog skin active peptide (FSAP) family. Brevinin subfamily. Expressed by the skin glands.

The protein resides in the secreted. In terms of biological role, fallaxidin-1.3 shows no antibacterial activity against Gram-positive or Gram-negative bacteria. Does not inhibit the formation of NO by neuronal nitric oxide synthase. Has no effect on splenocyte proliferation or smooth muscle contraction. Its function is as follows. Fallaxidin-1.4 shows no antibacterial activity against Gram-positive or Gram-negative bacteria. Does not inhibit the formation of NO by neuronal nitric oxide synthase. Has no effect on splenocyte proliferation or smooth muscle contraction. Fallaxidin-3.1 shows antibacterial activity against the Gram-positive bacteria E.faecalis (MIC=100 uM) and L.lactis (MIC=100 uM). No antibacterial activity against the Gram-positive bacteria B.cereus, L.innocua, M.luteus, S.epidermidis, S.uberis and S.aureus, or the Gram-negative bacteria E.cloacae and E.coli. This chain is Preprofallaxidin-6, found in Litoria fallax (Eastern dwarf tree frog).